Here is a 388-residue protein sequence, read N- to C-terminus: Cytochrome b (388 aa).

4 helical membrane passes run 32–52, 76–98, 113–133, and 179–199; these read FGSL…TLAM, WLIR…LHVG, TWTI…LGYV, and FFAL…MHLI. 2 residues coordinate heme b: His-82 and His-96. Heme b-binding residues include His-183 and His-197. His-202 contributes to the a ubiquinone binding site. 4 consecutive transmembrane segments (helical) span residues 226-246, 290-310, 322-342, and 349-369; these read FIFK…IFIF, LLGV…PITD, LSKI…QLGA, and FIEF…IIVP.

The protein belongs to the cytochrome b family. As to quaternary structure, fungal cytochrome b-c1 complex contains 10 subunits; 3 respiratory subunits, 2 core proteins and 5 low-molecular weight proteins. Cytochrome b-c1 complex is a homodimer. Requires heme b as cofactor.

The protein localises to the mitochondrion inner membrane. In terms of biological role, component of the ubiquinol-cytochrome c reductase complex (complex III or cytochrome b-c1 complex) that is part of the mitochondrial respiratory chain. The b-c1 complex mediates electron transfer from ubiquinol to cytochrome c. Contributes to the generation of a proton gradient across the mitochondrial membrane that is then used for ATP synthesis. In Zymoseptoria tritici (Speckled leaf blotch fungus), this protein is Cytochrome b (cob).